The chain runs to 1511 residues: Bifunctional glutamate/proline--tRNA ligase (1511 aa).

Residues 164-758 form a glutamate--tRNA ligase region; sequence GTKWDVSENK…SSVLYNRVAA (595 aa). The short motif at 204-214 is the 'HIGH' region element; the sequence is PEASGYLHIGH. The disordered stretch occupies residues 296 to 315; that stretch reads AEQMKAEREQRAESKHRQNS. The span at 299-315 shows a compositional bias: basic and acidic residues; the sequence is MKAEREQRAESKHRQNS. The residue at position 300 (K300) is an N6-acetyllysine; alternate. N6-malonyllysine; alternate is present on K300. The residue at position 355 (T355) is a Phosphothreonine. Residue K417 is modified to N6-acetyllysine. The short motif at 432 to 436 is the 'KMSKS' region element; it reads VLSKR. At S434 the chain carries Phosphoserine. N6-acetyllysine is present on residues K498, K535, K542, and K637. Residues 708–728 show a composition bias toward basic and acidic residues; it reads KEMPTSGSKEKTKAEPLKKET. The tract at residues 708–741 is disordered; that stretch reads KEMPTSGSKEKTKAEPLKKETSSAPKEGPVPAVS. S746 bears the Phosphoserine mark. One can recognise a WHEP-TRS 1 domain in the interval 748–804; it reads ESSVLYNRVAAQGDVVRELKAKKAAKEDVDAAVKQLLALKAEYKQKTGQEYKPGNPP. The segment at 759–955 is 3 X 57 AA approximate repeats; it reads QGDVVRELKA…GIEYKPVSAT (197 aa). Residue K787 is modified to N6-acetyllysine. Residues 794–823 form a disordered region; that stretch reads TGQEYKPGNPPSAAAQSASTKSLPSAGEDR. Positions 807–816 are enriched in polar residues; it reads AAQSASTKSL. The region spanning 821 to 877 is the WHEP-TRS 2 domain; the sequence is EDRSLYDKIAAQGEVVRKLKAEKAPKAKVTEAVECLLSLKAEYKEKTGKEYVPGQPP. K860 carries the N6-acetyllysine modification. 2 disordered regions span residues 868 to 903 and 952 to 1015; these read GKEY…AKAL and VSAT…RLGL. Y871 is modified (phosphotyrosine). Low complexity predominate over residues 877–890; it reads PASQKSQPSPASKA. S885 carries the phosphoserine; by CDK5 modification. Phosphothreonine is present on T897. The WHEP-TRS 3 domain maps to 899–955; that stretch reads EAKALFDRVACQGEVVRKLKAEKASKDQVDPAVQELLQLKAQYKSLTGIEYKPVSAT. Positions 957–975 are enriched in basic and acidic residues; that stretch reads SEDKDKKKKEKENKSEKQN. The segment covering 992 to 1005 has biased composition (gly residues); sequence QGGGLSSSGAGEGQ. At S997 the chain carries Phosphoserine. S998 is subject to Phosphoserine; by RPS6KB1. Position 999 is a phosphoserine (S999). The proline--tRNA ligase stretch occupies residues 1006 to 1511; that stretch reads GPKKQTRLGL…KFYTLFGRSY (506 aa). Residues 1120–1122 and R1151 contribute to the L-proline site; that span reads TSE. 6 residues coordinate ATP: R1151, E1153, R1162, T1163, Q1236, and T1239. R1151 carries the omega-N-methylarginine modification. Q1236 contributes to the Mg(2+) binding site. H1241 is an L-proline binding site. 2 residues coordinate ATP: T1275 and R1277. Position 1349 is a phosphoserine (S1349). Residues C1447, C1452, C1494, and C1496 each contribute to the Zn(2+) site. N6-acetyllysine is present on K1502.

The protein in the N-terminal section; belongs to the class-I aminoacyl-tRNA synthetase family. Glutamate--tRNA ligase type 2 subfamily. In the C-terminal section; belongs to the class-II aminoacyl-tRNA synthetase family. In terms of assembly, homodimer. Part of the aminoacyl-tRNA synthetase multienzyme complex, also know as multisynthetase complex, that is composed of the tRNA ligases for Arg (RARS1), Asp (DARS1), Gln (QARS1), Ile (IARS1), Leu (LARS1), Lys (KARS1), Met (MARS1) the bifunctional ligase for Glu and Pro (EPRS1) and the auxiliary subunits AIMP1/p43, AIMP2/p38 and EEF1E1/p18. Forms a linear complex that contains MARS1, EEF1E1, EPRS1 and AIMP2 that is at the core of the multisubunit complex. Interacts with TARS3. Interacts with DUS2L. Component of the GAIT complex which is composed of EPRS1, RPL13A and GAPDH. Interacts (phosphorylated at Ser-998) with SLC27A1; mediates the translocation of SLC27A1 from the cytoplasm to the plasma membrane thereby increasing the uptake of long-chain fatty acids. Post-translationally, phosphorylated at Ser-998 by RPS6KB1; triggers EPRS1 release from the aminoacyl-tRNA synthetase multienzyme complex. In monocytes, the IFN-gamma-induced phosphorylation at Ser-998 releases EPRS1 from the aminoacyl-tRNA synthetase multienzyme complex, allowing its association with the GAIT complex. Phosphorylation at Ser-998 is specifically required for the RPL13A-mediated interaction of the GAIT complex with eIF4G. Phosphorylation at Ser-998 by RPS6KB1, is also induced by insulin through activation of the mTORC1 signaling pathway and promotes the interaction of EPRS1 with SLC27A1.

The protein localises to the cytoplasm. It is found in the cytosol. Its subcellular location is the membrane. It catalyses the reaction tRNA(Glu) + L-glutamate + ATP = L-glutamyl-tRNA(Glu) + AMP + diphosphate. The catalysed reaction is tRNA(Pro) + L-proline + ATP = L-prolyl-tRNA(Pro) + AMP + diphosphate. Multifunctional protein which primarily functions within the aminoacyl-tRNA synthetase multienzyme complex, also known as multisynthetase complex. Within the complex it catalyzes the attachment of both L-glutamate and L-proline to their cognate tRNAs in a two-step reaction where the amino acid is first activated by ATP to form a covalent intermediate with AMP. Subsequently, the activated amino acid is transferred to the acceptor end of the cognate tRNA to form L-glutamyl-tRNA(Glu) and L-prolyl-tRNA(Pro). Upon interferon-gamma stimulation, EPRS1 undergoes phosphorylation, causing its dissociation from the aminoacyl-tRNA synthetase multienzyme complex. It is recruited to form the GAIT complex, which binds to stem loop-containing GAIT elements found in the 3'-UTR of various inflammatory mRNAs, such as ceruloplasmin. The GAIT complex inhibits the translation of these mRNAs, allowing interferon-gamma to redirect the function of EPRS1 from protein synthesis to translation inhibition in specific cell contexts. Furthermore, it can function as a downstream effector in the mTORC1 signaling pathway, by promoting the translocation of SLC27A1 from the cytoplasm to the plasma membrane where it mediates the uptake of long-chain fatty acid by adipocytes. Thereby, EPRS1 also plays a role in fat metabolism and more indirectly influences lifespan. The protein is Bifunctional glutamate/proline--tRNA ligase of Cricetulus griseus (Chinese hamster).